The primary structure comprises 448 residues: 5-hydroxytryptamine receptor 7 (448 aa).

Residues 1 to 86 (MMDVNSSGRP…INYGRVEKVV (86 aa)) lie on the Extracellular side of the membrane. Residues asparagine 5 and asparagine 69 are each glycosylated (N-linked (GlcNAc...) asparagine). The chain crosses the membrane as a helical span at residues 87–111 (IGSILTLITLLTIAGNCLVVISVCF). Topologically, residues 112-121 (VKKLRQPSNY) are cytoplasmic. A helical membrane pass occupies residues 122–143 (LIVSLALADLSVAVAVMPFVSV). Over 144–155 (TDLIGGKWIFGH) the chain is Extracellular. The helical transmembrane segment at 156 to 181 (FFCNVFIAMDVMCCTASIMTLCVISI) threads the bilayer. A disulfide bond links cysteine 158 and cysteine 234. Residue aspartate 165 coordinates serotonin. Residues 182-201 (DRYLGITRPLTYPVRQNGKC) are Cytoplasmic-facing. Residues 202–222 (MAKMILSVWLLSASITLPPLF) form a helical membrane-spanning segment. Topologically, residues 223 to 240 (GWAQNVNDDKVCLISQDF) are extracellular. Residues 241-263 (GYTIYSTAVAFYIPMSVMLFMYY) form a helical membrane-spanning segment. The Cytoplasmic segment spans residues 264-329 (QIYKAARKSA…SIFKREQKAA (66 aa)). Residues 330–355 (TTLGIIVGAFTVCWLPFFLLSTARPF) form a helical membrane-spanning segment. The Extracellular segment spans residues 356–366 (ICGTSCSCIPL). The helical transmembrane segment at 367–390 (WVERTCLWLGYANSLINPFIYAFF) threads the bilayer. Over 391–448 (NRDLRTTYRSLLQCQYRNINRKLSAAGMHEALKLAERPERSEFVLQNCDHCGKKGHDT) the chain is Cytoplasmic. The S-palmitoyl cysteine moiety is linked to residue cysteine 404.

It belongs to the G-protein coupled receptor 1 family.

Its subcellular location is the cell membrane. Functionally, G-protein coupled receptor for 5-hydroxytryptamine (serotonin), a biogenic hormone that functions as a neurotransmitter, a hormone and a mitogen. Ligand binding causes a conformation change that triggers signaling via guanine nucleotide-binding proteins (G proteins) and modulates the activity of downstream effectors. HTR7 is coupled to G(s) G alpha proteins and mediates activation of adenylate cyclase activity. The sequence is that of 5-hydroxytryptamine receptor 7 (Htr7) from Mus musculus (Mouse).